A 296-amino-acid chain; its full sequence is Ribosomal RNA small subunit methyltransferase H (296 aa).

Residues 41-43 (GGY), aspartate 59, phenylalanine 86, aspartate 104, and glutamine 111 each bind S-adenosyl-L-methionine.

Belongs to the methyltransferase superfamily. RsmH family.

It localises to the cytoplasm. It catalyses the reaction cytidine(1402) in 16S rRNA + S-adenosyl-L-methionine = N(4)-methylcytidine(1402) in 16S rRNA + S-adenosyl-L-homocysteine + H(+). Its function is as follows. Specifically methylates the N4 position of cytidine in position 1402 (C1402) of 16S rRNA. The chain is Ribosomal RNA small subunit methyltransferase H from Neorickettsia sennetsu (strain ATCC VR-367 / Miyayama) (Ehrlichia sennetsu).